Reading from the N-terminus, the 279-residue chain is Calcium-binding protein 4 (279 aa).

Basic and acidic residues predominate over residues 1 to 12 (MAEEQGRGRHGP). Residues 1–114 (MAEEQGRGRH…PGPQHDAAQR (114 aa)) form a disordered region. Residue S42 is modified to Phosphoserine. A compositionally biased stretch (polar residues) spans 55-65 (GPSSSGEQTPM). EF-hand domains follow at residues 133 to 168 (EELDELQAAFEEFDTDHDGYIGYRDLGECMRTLGYM), 187 to 204 (GRVDFEEFVEMMGPKLRE), 210 to 245 (LGLRELRIAFREFDRDRDGRITVAELREAAPALLGE), and 247 to 279 (LVGPELEEMLQEVDLNGDGTVDFNEFVMMLSRH). Residues D146, D148, D150, Y152, and D157 each coordinate Ca(2+). 10 residues coordinate Ca(2+): D223, D225, D227, R229, E234, D260, N262, D264, T266, and E271.

As to quaternary structure, interacts with CACNA1F and CACNA1D (via IQ domain) in a calcium independent manner. Interacts (via N-terminus) with UNC119. In terms of processing, phosphorylated. Phosphorylation levels change with the light conditions and regulate the activity. In terms of tissue distribution, expressed in the retina.

The protein localises to the cytoplasm. Its subcellular location is the presynapse. May play a role in normal synaptic function, probably through regulation of Ca(2+) influx and neurotransmitter release in photoreceptor synaptic terminals and in auditory transmission. Modulator of CACNA1F, shifting the activation range to more hyperpolarized voltages. This Bos taurus (Bovine) protein is Calcium-binding protein 4 (CABP4).